We begin with the raw amino-acid sequence, 493 residues long: Dipeptidase 3 (493 aa).

Residues 1 to 35 (MQPAGLEGPRALGLRPLGHRLSLLGVLLLVPSLWV) form the signal peptide. Positions 41-60 (TPSPSSAPTTPEASNATTAP) are enriched in low complexity. A disordered region spans residues 41 to 74 (TPSPSSAPTTPEASNATTAPGIPNDTATSGVTSD). Cystine bridges form between cysteine 143-cysteine 222 and cysteine 294-cysteine 326. An N-linked (GlcNAc...) asparagine glycan is attached at asparagine 331. Serine 462 carries the GPI-anchor amidated serine lipid modification. A propeptide spans 463–493 (KAPPHPLPGLMATLTSLALILWLCCSGHRAV) (removed in mature form).

The protein belongs to the metallo-dependent hydrolases superfamily. Peptidase M19 family. In terms of assembly, homodimer; disulfide-linked. Interacts with TEX101; co-localized on the cell surface of spermatocytes, spermatids, and testicular spermatozoa, co-localized only in cytoplasmic droplets of caput and corpus epididymal sperm. In terms of tissue distribution, expressed in testis but not ovary.

It localises to the membrane. Functionally, lacks dipeptidase activity and is unable to hydrolyze cystinyl-bis-glycine. The absence of activity may be due to the inability of serine (instead of aspartate found in DPEP1/2) at position 356 to function as the acid/base catalyst and activate the nucleophilic water/hydroxide. Does not hydrolyze leukotriene D4 (LTD4) into leukotriene E4 (LTE4). Does not hydrolyze the beta-lactam antibiotic imipenem. In Mus musculus (Mouse), this protein is Dipeptidase 3 (Dpep3).